Here is a 135-residue protein sequence, read N- to C-terminus: Sex-regulated protein janus-A (135 aa).

Lysine 37 lines the substrate pocket. Histidine 63 functions as the Proton acceptor in the catalytic mechanism. 104–106 provides a ligand contact to substrate; sequence SQG.

It belongs to the janus family.

Functionally, janA and janB regulate somatic sex differentiation. This Drosophila yakuba (Fruit fly) protein is Sex-regulated protein janus-A (janA).